The chain runs to 397 residues: ATP-dependent RNA helicase eIF4A (397 aa).

The Q motif signature appears at 24–52; that stretch reads DSFDDMNLKSELLRGIYAYGFERPSAIQQ. The region spanning 55 to 225 is the Helicase ATP-binding domain; it reads IMPVIKGHDV…TKFMRDPVRI (171 aa). 68–75 contributes to the ATP binding site; the sequence is AQSGTGKT. The DEAD box signature appears at 173 to 176; it reads DEAD. Residues 236–397 form the Helicase C-terminal domain; sequence GIKQFYIAVE…EMPMNVADLI (162 aa).

The protein belongs to the DEAD box helicase family. eIF4A subfamily. In terms of assembly, component of the eIF4F complex, which composition varies with external and internal environmental conditions. It is composed of at least eIF4A, eIF4E and eIF4G.

The protein localises to the cytoplasm. The enzyme catalyses ATP + H2O = ADP + phosphate + H(+). In terms of biological role, ATP-dependent RNA helicase which is a subunit of the eIF4F complex involved in cap recognition and is required for mRNA binding to ribosome. In the current model of translation initiation, eIF4A unwinds RNA secondary structures in the 5'-UTR of mRNAs which is necessary to allow efficient binding of the small ribosomal subunit, and subsequent scanning for the initiator codon. The protein is ATP-dependent RNA helicase eIF4A (TIF1) of Chaetomium globosum (strain ATCC 6205 / CBS 148.51 / DSM 1962 / NBRC 6347 / NRRL 1970) (Soil fungus).